A 443-amino-acid chain; its full sequence is Amino-acid acetyltransferase (443 aa).

The N-acetyltransferase domain occupies 296–436 (EQIRRATIND…KMYNYQRRSK (141 aa)).

This sequence belongs to the acetyltransferase family. ArgA subfamily. In terms of assembly, homohexamer.

The protein localises to the cytoplasm. It catalyses the reaction L-glutamate + acetyl-CoA = N-acetyl-L-glutamate + CoA + H(+). It participates in amino-acid biosynthesis; L-arginine biosynthesis; N(2)-acetyl-L-ornithine from L-glutamate: step 1/4. In Salmonella arizonae (strain ATCC BAA-731 / CDC346-86 / RSK2980), this protein is Amino-acid acetyltransferase.